A 339-amino-acid chain; its full sequence is Tetracenomycin polyketide synthesis 8-O-methyl transferase TcmO (339 aa).

S-adenosyl-L-methionine contacts are provided by residues aspartate 200 and glycine 226 to phenylalanine 228. Histidine 246 functions as the Proton acceptor in the catalytic mechanism.

It belongs to the class I-like SAM-binding methyltransferase superfamily. Cation-independent O-methyltransferase family.

It functions in the pathway antibiotic biosynthesis; tetracenomycin C biosynthesis. In Streptomyces glaucescens, this protein is Tetracenomycin polyketide synthesis 8-O-methyl transferase TcmO (tcmO).